The following is a 467-amino-acid chain: UDP-N-acetylmuramate--L-alanine ligase (467 aa).

Position 112 to 118 (112 to 118 (GTHGKTT)) interacts with ATP.

It belongs to the MurCDEF family.

The protein resides in the cytoplasm. The catalysed reaction is UDP-N-acetyl-alpha-D-muramate + L-alanine + ATP = UDP-N-acetyl-alpha-D-muramoyl-L-alanine + ADP + phosphate + H(+). Its pathway is cell wall biogenesis; peptidoglycan biosynthesis. In terms of biological role, cell wall formation. In Paraburkholderia phytofirmans (strain DSM 17436 / LMG 22146 / PsJN) (Burkholderia phytofirmans), this protein is UDP-N-acetylmuramate--L-alanine ligase.